A 74-amino-acid polypeptide reads, in one-letter code: Defensin (74 aa).

The N-terminal stretch at 1–21 (MRGIYICLVFVLVCGLVSGLA) is a signal peptide. The propeptide occupies 22–34 (DVPAESEMAHLRV). Disulfide bonds link C40/C61, C47/C69, and C51/C71.

Expressed in the hemocytes, fat body and ovaries.

It localises to the secreted. Functionally, antibacterial peptide mostly active against Gram-positive bacteria. In Rhipicephalus microplus (Cattle tick), this protein is Defensin.